A 380-amino-acid polypeptide reads, in one-letter code: Cytochrome b (380 aa).

4 consecutive transmembrane segments (helical) span residues 34-54 (FGSL…LLAT), 78-99 (WLIR…YLHI), 114-134 (WNTG…GYVL), and 179-199 (FFAL…IHLT). Residues His84 and His98 each coordinate heme b. Residues His183 and His197 each coordinate heme b. An a ubiquinone-binding site is contributed by His202. A run of 4 helical transmembrane segments spans residues 227 to 247 (LKDI…ALFS), 289 to 309 (LGGV…PLLH), 321 to 341 (FSQF…WVGS), and 348 to 368 (FIII…LLFP).

Belongs to the cytochrome b family. As to quaternary structure, the cytochrome bc1 complex contains 11 subunits: 3 respiratory subunits (MT-CYB, CYC1 and UQCRFS1), 2 core proteins (UQCRC1 and UQCRC2) and 6 low-molecular weight proteins (UQCRH/QCR6, UQCRB/QCR7, UQCRQ/QCR8, UQCR10/QCR9, UQCR11/QCR10 and a cleavage product of UQCRFS1). This cytochrome bc1 complex then forms a dimer. Heme b serves as cofactor.

Its subcellular location is the mitochondrion inner membrane. In terms of biological role, component of the ubiquinol-cytochrome c reductase complex (complex III or cytochrome b-c1 complex) that is part of the mitochondrial respiratory chain. The b-c1 complex mediates electron transfer from ubiquinol to cytochrome c. Contributes to the generation of a proton gradient across the mitochondrial membrane that is then used for ATP synthesis. This Alca torda (Razorbill) protein is Cytochrome b (MT-CYB).